The chain runs to 426 residues: 4-aminobutyrate aminotransferase GabT (426 aa).

Pyridoxal 5'-phosphate is bound by residues 111 to 112 (GS) and Gln242. Lys268 is modified (N6-(pyridoxal phosphate)lysine). Thr297 serves as a coordination point for pyridoxal 5'-phosphate.

This sequence belongs to the class-III pyridoxal-phosphate-dependent aminotransferase family. As to quaternary structure, homotetramer. Pyridoxal 5'-phosphate serves as cofactor.

The enzyme catalyses 4-aminobutanoate + 2-oxoglutarate = succinate semialdehyde + L-glutamate. The catalysed reaction is 5-aminopentanoate + 2-oxoglutarate = 5-oxopentanoate + L-glutamate. Its pathway is amino-acid degradation; 4-aminobutanoate degradation. It participates in amino-acid degradation. Pyridoxal phosphate-dependent enzyme that catalyzes transamination between primary amines and alpha-keto acids. Catalyzes the transfer of the amino group from gamma-aminobutyrate (GABA) to alpha-ketoglutarate (KG) to yield succinic semialdehyde (SSA) and glutamate. Thereby functions in a GABA degradation pathway that allows some E.coli strains to utilize GABA as a nitrogen source for growth. Also catalyzes the conversion of 5-aminovalerate to glutarate semialdehyde, as part of a L-lysine degradation pathway that proceeds via cadaverine, glutarate and L-2-hydroxyglutarate. The sequence is that of 4-aminobutyrate aminotransferase GabT (gabT) from Escherichia coli (strain K12).